Reading from the N-terminus, the 793-residue chain is Phenylalanine--tRNA ligase beta subunit (793 aa).

In terms of domain architecture, tRNA-binding spans 39-148 (AGQFTHVIVA…DEAPIGMDLR (110 aa)). The region spanning 401–477 (PGTVSFLFDT…RLYGYDKLQA (77 aa)) is the B5 domain. Residues D455, D461, E464, and E465 each coordinate Mg(2+). The 95-residue stretch at 698 to 792 (SKYPQIRRDL…LENEFSILLR (95 aa)) folds into the FDX-ACB domain.

The protein belongs to the phenylalanyl-tRNA synthetase beta subunit family. Type 1 subfamily. As to quaternary structure, tetramer of two alpha and two beta subunits. The cofactor is Mg(2+).

It is found in the cytoplasm. The enzyme catalyses tRNA(Phe) + L-phenylalanine + ATP = L-phenylalanyl-tRNA(Phe) + AMP + diphosphate + H(+). The polypeptide is Phenylalanine--tRNA ligase beta subunit (Legionella pneumophila (strain Paris)).